Here is a 900-residue protein sequence, read N- to C-terminus: Isoleucine--tRNA ligase (900 aa).

Positions 59–69 (PYANGNIHMGH) match the 'HIGH' region motif. Residue Glu550 coordinates L-isoleucyl-5'-AMP. The 'KMSKS' region signature appears at 591–595 (KMSKS). Lys594 provides a ligand contact to ATP. Residues Cys876, Cys879, Cys892, and Cys895 each contribute to the Zn(2+) site.

The protein belongs to the class-I aminoacyl-tRNA synthetase family. IleS type 1 subfamily. Monomer. It depends on Zn(2+) as a cofactor.

The protein resides in the cytoplasm. It carries out the reaction tRNA(Ile) + L-isoleucine + ATP = L-isoleucyl-tRNA(Ile) + AMP + diphosphate. Catalyzes the attachment of isoleucine to tRNA(Ile). As IleRS can inadvertently accommodate and process structurally similar amino acids such as valine, to avoid such errors it has two additional distinct tRNA(Ile)-dependent editing activities. One activity is designated as 'pretransfer' editing and involves the hydrolysis of activated Val-AMP. The other activity is designated 'posttransfer' editing and involves deacylation of mischarged Val-tRNA(Ile). The chain is Isoleucine--tRNA ligase from Onion yellows phytoplasma (strain OY-M).